The primary structure comprises 453 residues: MAFSVVILAAGKGTRMKSSMPKVLHPIGAKPMVQRIIDTVHQLGAASINLVYGHQAEQLQQALGHNALNWCLQAEQLGTGHAVQQAVPHISDDEDVLILVGDAPLIKANTLHNLLQVKNNADVALLTVNVADPTGMGRIIRQGDNVTAIVEHKDASDAQRQICEINTGMMVLNGKDLKRWLANLNSNNAQGEFYLTDVIEMAANEGKVIKAAQPNSEIEVEGINNRKQLAAIERAFQFEQAQELMMQGVSLLDPHRFDLRGDIIVGQDISIDVNVVIEGTVKIGSNVTIGPNCILKDCEIADGATIEANSMLDQAIVGENCSVGPYARLRPGAVMHENARVGNFVEMKKTTLGKGSKANHLTYLGDTTVGIGANIGAGTITCNYDGVNKSKTIIGDGAFIGSNSALVAPVQIGNMATVGAGSVVTKTVADQELAIARAKQRNVSGWQRPTKPE.

The interval 1 to 226 is pyrophosphorylase; the sequence is MAFSVVILAA…EIEVEGINNR (226 aa). Residues 8–11, Lys-22, Gln-73, and 78–79 each bind UDP-N-acetyl-alpha-D-glucosamine; these read LAAG and GT. Asp-102 is a Mg(2+) binding site. The UDP-N-acetyl-alpha-D-glucosamine site is built by Gly-137, Glu-151, Asn-166, and Asn-224. Asn-224 serves as a coordination point for Mg(2+). Positions 227-247 are linker; it reads KQLAAIERAFQFEQAQELMMQ. The interval 248-453 is N-acetyltransferase; it reads GVSLLDPHRF…SGWQRPTKPE (206 aa). Positions 330 and 348 each coordinate UDP-N-acetyl-alpha-D-glucosamine. His-360 serves as the catalytic Proton acceptor. Residues Tyr-363 and Asn-374 each contribute to the UDP-N-acetyl-alpha-D-glucosamine site. Residues Ala-377, 383 to 384, Ser-402, Ala-420, and Arg-437 each bind acetyl-CoA; that span reads NY.

It in the N-terminal section; belongs to the N-acetylglucosamine-1-phosphate uridyltransferase family. The protein in the C-terminal section; belongs to the transferase hexapeptide repeat family. In terms of assembly, homotrimer. It depends on Mg(2+) as a cofactor.

The protein resides in the cytoplasm. The catalysed reaction is alpha-D-glucosamine 1-phosphate + acetyl-CoA = N-acetyl-alpha-D-glucosamine 1-phosphate + CoA + H(+). The enzyme catalyses N-acetyl-alpha-D-glucosamine 1-phosphate + UTP + H(+) = UDP-N-acetyl-alpha-D-glucosamine + diphosphate. Its pathway is nucleotide-sugar biosynthesis; UDP-N-acetyl-alpha-D-glucosamine biosynthesis; N-acetyl-alpha-D-glucosamine 1-phosphate from alpha-D-glucosamine 6-phosphate (route II): step 2/2. It functions in the pathway nucleotide-sugar biosynthesis; UDP-N-acetyl-alpha-D-glucosamine biosynthesis; UDP-N-acetyl-alpha-D-glucosamine from N-acetyl-alpha-D-glucosamine 1-phosphate: step 1/1. It participates in bacterial outer membrane biogenesis; LPS lipid A biosynthesis. Catalyzes the last two sequential reactions in the de novo biosynthetic pathway for UDP-N-acetylglucosamine (UDP-GlcNAc). The C-terminal domain catalyzes the transfer of acetyl group from acetyl coenzyme A to glucosamine-1-phosphate (GlcN-1-P) to produce N-acetylglucosamine-1-phosphate (GlcNAc-1-P), which is converted into UDP-GlcNAc by the transfer of uridine 5-monophosphate (from uridine 5-triphosphate), a reaction catalyzed by the N-terminal domain. The protein is Bifunctional protein GlmU of Pseudoalteromonas atlantica (strain T6c / ATCC BAA-1087).